An 835-amino-acid polypeptide reads, in one-letter code: Serine/threonine-protein kinase TNNI3K (835 aa).

Residues 21–51 are a coiled coil; it reads SESYVITIERLEDDLQIKEKELTELRNIFGS. 10 ANK repeats span residues 66–96, 100–129, 133–162, 166–195, 199–228, 234–263, 269–298, 304–335, 339–368, and 381–410; these read NGLSLLHLCCICGGKKSHIRTLMLKGLRPSR, NGFTALHLAVYKDNAELITSLLHSGADIQQ, GGLTALHIATIAGHLEAADVLLQHGANVNI, VFFTPLHIAAYYGHEQVTRLLLKFGADVNV, VGDRPLHLASAKGFLNIAKLLMEEGSKADV, EDHVPLHFCSRFGHHDIVKYLLQSDLEVQP, YGDTPLHLACYNGKFEVAKEIIQISGTESL, FSETAFHSACTYGKSIDLVKFLLDQNVININH, DGHTGLHSACYHGHIRLVQFLLDNGADMNL, and DEQTCLMWAYEKGHDAIVTLLKHYKRPQDE. Positions 463 to 723 constitute a Protein kinase domain; sequence IEFHEIIGSG…EVVMKLEECL (261 aa). Residues 469–477 and Lys490 contribute to the ATP site; that span reads IGSGSFGKV. Residue Asp588 is the Proton acceptor of the active site. A compositionally biased stretch (low complexity) spans 732 to 746; that stretch reads ASSNSSGSLSPSSSS. Residues 732–751 form a disordered region; sequence ASSNSSGSLSPSSSSDCLVN.

The protein belongs to the protein kinase superfamily. TKL Ser/Thr protein kinase family. MAP kinase kinase kinase subfamily. Interacts with TNNI3, ACTC1, ACTA1, MYBPC3, AIP, FABP3 and HADHB. The cofactor is Mg(2+). Autophosphorylated. As to expression, highly expressed in both adult and fetal heart.

It localises to the nucleus. Its subcellular location is the cytoplasm. The catalysed reaction is L-seryl-[protein] + ATP = O-phospho-L-seryl-[protein] + ADP + H(+). It catalyses the reaction L-threonyl-[protein] + ATP = O-phospho-L-threonyl-[protein] + ADP + H(+). Functionally, may play a role in cardiac physiology. In Homo sapiens (Human), this protein is Serine/threonine-protein kinase TNNI3K.